Here is a 138-residue protein sequence, read N- to C-terminus: Putative pre-16S rRNA nuclease (138 aa).

Belongs to the YqgF nuclease family.

Its subcellular location is the cytoplasm. Functionally, could be a nuclease involved in processing of the 5'-end of pre-16S rRNA. This chain is Putative pre-16S rRNA nuclease, found in Escherichia fergusonii (strain ATCC 35469 / DSM 13698 / CCUG 18766 / IAM 14443 / JCM 21226 / LMG 7866 / NBRC 102419 / NCTC 12128 / CDC 0568-73).